A 2142-amino-acid chain; its full sequence is U5 small nuclear ribonucleoprotein 200 kDa helicase (2142 aa).

3 disordered regions span residues methionine 52 to arginine 74, glutamate 211 to glycine 234, and arginine 366 to alanine 396. Positions aspartate 369–alanine 391 are enriched in basic and acidic residues. The 184-residue stretch at lysine 490–leucine 673 folds into the Helicase ATP-binding 1 domain. Position 503–510 (alanine 503–threonine 510) interacts with ATP. The DEIH box motif lies at aspartate 615–histidine 618. A Helicase C-terminal 1 domain is found at serine 684 to valine 917. Residues valine 981 to phenylalanine 1286 form the SEC63 1 domain. Positions asparagine 1337 to phenylalanine 1511 constitute a Helicase ATP-binding 2 domain. Residue alanine 1350–methionine 1357 participates in ATP binding. Positions aspartate 1453–glutamine 1456 match the DELQ box motif. A Helicase C-terminal 2 domain is found at proline 1544–aspartate 1752. The SEC63 2 domain maps to proline 1811–isoleucine 2128.

The protein belongs to the helicase family. SKI2 subfamily.

It localises to the nucleus. It carries out the reaction ATP + H2O = ADP + phosphate + H(+). In terms of biological role, catalyzes the ATP-dependent unwinding of U4/U6 RNA duplices, an essential step in the assembly of a catalytically active spliceosome. Plays a role in pre-mRNA splicing. The polypeptide is U5 small nuclear ribonucleoprotein 200 kDa helicase (Drosophila melanogaster (Fruit fly)).